A 611-amino-acid polypeptide reads, in one-letter code: ANK repeat-containing protein nipk-1 (611 aa).

The stretch at 91-149 (NSKSKKKTENQETKEKDEEAEEKKDGPPKDDKELKMKKEKEQEDENAELDEQKKDGDLL) forms a coiled coil. Disordered stretches follow at residues 92-167 (SKSK…SHPY), 212-255 (ISAS…DTSR), and 280-333 (TKEE…LSPR). The span at 97 to 131 (KTENQETKEKDEEAEEKKDGPPKDDKELKMKKEKE) shows a compositional bias: basic and acidic residues. 3 stretches are compositionally biased toward polar residues: residues 212-223 (ISASTTPDTVLS), 239-255 (ESLQ…DTSR), and 315-333 (GTCS…LSPR). ANK repeat units lie at residues 375–405 (DGDT…TMNE), 417–446 (FGET…SPNS), 452–482 (VGDS…RVNE), 486–527 (DGQT…DPTI), and 532–561 (TGKT…EDTF).

The protein belongs to the iASPP family. As to expression, expressed in the nervous system.

Acts downstream of the receptor complex composed of ilcr-1 and ilcr-2, which is a signaling complex that modulates neuronal activity and animal behavior in response to sensory neuron input. Mediates signaling of the complex. In Caenorhabditis elegans, this protein is ANK repeat-containing protein nipk-1.